We begin with the raw amino-acid sequence, 199 residues long: dITP/XTP pyrophosphatase (199 aa).

A substrate-binding site is contributed by 8 to 13; sequence TSNKNK. Residues glutamate 40 and aspartate 68 each coordinate Mg(2+). Aspartate 68 serves as the catalytic Proton acceptor. Residues serine 69, 154–157, lysine 177, and 182–183 contribute to the substrate site; these read FGYD and HR.

Belongs to the HAM1 NTPase family. In terms of assembly, homodimer. Requires Mg(2+) as cofactor.

It carries out the reaction XTP + H2O = XMP + diphosphate + H(+). It catalyses the reaction dITP + H2O = dIMP + diphosphate + H(+). The enzyme catalyses ITP + H2O = IMP + diphosphate + H(+). Pyrophosphatase that catalyzes the hydrolysis of nucleoside triphosphates to their monophosphate derivatives, with a high preference for the non-canonical purine nucleotides XTP (xanthosine triphosphate), dITP (deoxyinosine triphosphate) and ITP. Seems to function as a house-cleaning enzyme that removes non-canonical purine nucleotides from the nucleotide pool, thus preventing their incorporation into DNA/RNA and avoiding chromosomal lesions. This chain is dITP/XTP pyrophosphatase, found in Wigglesworthia glossinidia brevipalpis.